Reading from the N-terminus, the 240-residue chain is MKRPSGRAADQLRSIRITRNYTKHAEGSVLVEFGDTKVICTVSVENGVPRFLKGQGQGWLTAEYGMLPRSTGERNQREASRGKQGGRTLEIQRLIGRSLRAALDMSKLGDITLYVDCDVIQADGGTRTASITGAMVALCDALAVIKKRGGLKAGNPLKHMIAAVSVGMYQGEAVLDLDYPEDSAAETDLNVVMTSAGGFIEVQGTAEGAPFQPEDFNAMLALAQKGMNEIFELQQAALAD.

Phosphate is bound by residues Arg-87 and 125–127 (GTR).

Belongs to the RNase PH family. In terms of assembly, homohexameric ring arranged as a trimer of dimers.

The enzyme catalyses tRNA(n+1) + phosphate = tRNA(n) + a ribonucleoside 5'-diphosphate. Functionally, phosphorolytic 3'-5' exoribonuclease that plays an important role in tRNA 3'-end maturation. Removes nucleotide residues following the 3'-CCA terminus of tRNAs; can also add nucleotides to the ends of RNA molecules by using nucleoside diphosphates as substrates, but this may not be physiologically important. Probably plays a role in initiation of 16S rRNA degradation (leading to ribosome degradation) during starvation. The sequence is that of Ribonuclease PH from Pseudomonas putida (strain GB-1).